Here is a 239-residue protein sequence, read N- to C-terminus: MSEPKYKRILLKLSGEALAQGEQGFGVDPTRVHEIAAEIAEVHRLGVDIGVVVGGGNFFRGVAEQAKDMDRVSADHMGMLATVMNSLAVQDALEKQNVQCRVMSAIEIFQVAEPFIRRRAMRHLEKGRVVIFAAGTGNPYFSTDTAASLRAAEIKADVIMKATKVDGIYDADPHKVADATMFAQITYMDVLKKGLRVMDATAISLCQENRLPIVVFNLNERGNIQRVVMGEAVGSLVSA.

12–15 (KLSG) serves as a coordination point for ATP. The involved in allosteric activation by GTP stretch occupies residues 21 to 26 (GEQGFG). Gly-55 contacts UMP. Residues Gly-56 and Arg-60 each coordinate ATP. UMP is bound by residues Asp-75 and 136 to 143 (TGNPYFST). 3 residues coordinate ATP: Thr-163, Tyr-169, and Asp-172.

The protein belongs to the UMP kinase family. As to quaternary structure, homohexamer.

Its subcellular location is the cytoplasm. It catalyses the reaction UMP + ATP = UDP + ADP. The protein operates within pyrimidine metabolism; CTP biosynthesis via de novo pathway; UDP from UMP (UMPK route): step 1/1. Allosterically activated by GTP. Inhibited by UTP. Catalyzes the reversible phosphorylation of UMP to UDP. This chain is Uridylate kinase, found in Koribacter versatilis (strain Ellin345).